The chain runs to 149 residues: Protein SprT-like (149 aa).

Positions 6–147 (LQKLTEDISL…CGKCRGKIKR (142 aa)) constitute a SprT-like domain. H67 serves as a coordination point for Zn(2+). The active site involves E68. H71 is a Zn(2+) binding site.

It belongs to the SprT family. It depends on Zn(2+) as a cofactor.

Its subcellular location is the cytoplasm. The polypeptide is Protein SprT-like (Bacillus velezensis (strain DSM 23117 / BGSC 10A6 / LMG 26770 / FZB42) (Bacillus amyloliquefaciens subsp. plantarum)).